A 149-amino-acid polypeptide reads, in one-letter code: Histidine-containing phosphotransfer protein 2 (149 aa).

One can recognise an HPt domain in the interval 39–144 (TPGFVSEVVT…LQLEQQIQAY (106 aa)). At His80 the chain carries Phosphohistidine.

In terms of processing, two-component system major event consists of a His-to-Asp phosphorelay between a sensor histidine kinase (HK) and a response regulator (RR). In plants, the His-to-Asp phosphorelay involves an additional intermediate named Histidine-containing phosphotransfer protein (HPt). This multistep phosphorelay consists of a His-Asp-His-Asp sequential transfer of a phosphate group between first a His and an Asp of the HK protein, followed by the transfer to a conserved His of the HPt protein and finally the transfer to an Asp in the receiver domain of the RR protein. As to expression, widely expressed.

Its subcellular location is the cytoplasm. It localises to the cytosol. The protein localises to the nucleus. Functions as a two-component phosphorelay mediators between cytokinin sensor histidine kinases and response regulators (B-type ARRs). Plays an important role in propagating cytokinin signal transduction through the multistep His-to-Asp phosphorelay. Functions as a positive regulator of the cytokinin signaling pathway. May play a regulatory role in salt and drought tolerance during plant development. The chain is Histidine-containing phosphotransfer protein 2 from Oryza sativa subsp. japonica (Rice).